The sequence spans 213 residues: Orotate phosphoribosyltransferase (213 aa).

A 5-phospho-alpha-D-ribose 1-diphosphate-binding site is contributed by Lys-26. 34-35 (FF) is a binding site for orotate. 5-phospho-alpha-D-ribose 1-diphosphate is bound by residues 72–73 (YK), Arg-99, Lys-100, Lys-103, His-105, and 124–132 (DDVITAGTA). Residues Thr-128 and Arg-156 each coordinate orotate.

It belongs to the purine/pyrimidine phosphoribosyltransferase family. PyrE subfamily. Homodimer. Requires Mg(2+) as cofactor.

It carries out the reaction orotidine 5'-phosphate + diphosphate = orotate + 5-phospho-alpha-D-ribose 1-diphosphate. It participates in pyrimidine metabolism; UMP biosynthesis via de novo pathway; UMP from orotate: step 1/2. Catalyzes the transfer of a ribosyl phosphate group from 5-phosphoribose 1-diphosphate to orotate, leading to the formation of orotidine monophosphate (OMP). In Salmonella typhi, this protein is Orotate phosphoribosyltransferase.